A 340-amino-acid chain; its full sequence is ATP-dependent 6-phosphofructokinase (340 aa).

Glycine 11 serves as a coordination point for ATP. 21–25 (RAVVR) is a binding site for ADP. ATP is bound by residues 72–73 (RY) and 102–105 (GDGS). Mg(2+) is bound at residue aspartate 103. Residue 125 to 127 (TID) coordinates substrate. Catalysis depends on aspartate 127, which acts as the Proton acceptor. Arginine 154 contacts ADP. Substrate is bound by residues arginine 162 and 169–171 (MGR). Residues 185–187 (GAD) and 213–215 (KHH) each bind ADP. Substrate is bound by residues glutamate 222, arginine 244, and 250 to 253 (HLLR).

The protein belongs to the phosphofructokinase type A (PFKA) family. ATP-dependent PFK group I subfamily. Prokaryotic clade 'B1' sub-subfamily. In terms of assembly, homotetramer. Mg(2+) is required as a cofactor.

It is found in the cytoplasm. It carries out the reaction beta-D-fructose 6-phosphate + ATP = beta-D-fructose 1,6-bisphosphate + ADP + H(+). It participates in carbohydrate degradation; glycolysis; D-glyceraldehyde 3-phosphate and glycerone phosphate from D-glucose: step 3/4. Allosterically activated by ADP and other diphosphonucleosides, and allosterically inhibited by phosphoenolpyruvate. Functionally, catalyzes the phosphorylation of D-fructose 6-phosphate to fructose 1,6-bisphosphate by ATP, the first committing step of glycolysis. This chain is ATP-dependent 6-phosphofructokinase, found in Streptococcus agalactiae serotype Ia (strain ATCC 27591 / A909 / CDC SS700).